The primary structure comprises 301 residues: Prohibitin-2 (301 aa).

Necessary for transcriptional repression regions lie at residues Val19–Ala49 and Ala150–Asp174. Residues Ser190–Met237 are a coiled coil.

Belongs to the prohibitin family. The mitochondrial prohibitin complex consists of two subunits (PHB1 and PHB2), assembled into a membrane-associated ring-shaped supercomplex of approximately 1 mDa.

The protein resides in the mitochondrion inner membrane. Its subcellular location is the cytoplasm. The protein localises to the nucleus. It localises to the cell membrane. In terms of biological role, protein with pleiotropic attributes mediated in a cell-compartment- and tissue-specific manner, which include the plasma membrane-associated cell signaling functions, mitochondrial chaperone, and transcriptional co-regulator of transcription factors and sex steroid hormones in the nucleus. Its function is as follows. In the mitochondria, together with PHB, forms large ring complexes (prohibitin complexes) in the inner mitochondrial membrane (IMM) and functions as a chaperone protein that stabilizes mitochondrial respiratory enzymes and maintains mitochondrial integrity in the IMM, which is required for mitochondrial morphogenesis, neuronal survival, and normal lifespan. Functionally, in the nucleus, serves as transcriptional co-regulator. This chain is Prohibitin-2 (PHB2), found in Gallus gallus (Chicken).